We begin with the raw amino-acid sequence, 448 residues long: MKAVIIGAGEVGYHIAKALSPKNDVVIIDKDEEAAKRADELDVLVIEGNGANAEILSRVLQNADLLVAVTGVDEVNIVACMTAKLIMKNKNGWKDTKTIARVSNPDYIDSPVTSRAQVGVDLMICPELALASEVADILSSPSAIDAEMFAEGKVRMTEFAISPESKLVGKHMQDLKLADCCIVSAVFREDQIIIPHGDDLIKANDHMVVVGKPESMEDLESVFGSKVSHRTRILLIGCGIVGMYLAKLIDKEENADLRIIEHSKSRCIEVAEILENALVLNGDGTDVSLLREENIEDMDVVVAVTDSDEKNLLCSLLAKQLGAKKVIARADRSDYLPLFEMVGIDMAVSPREATVNEVLKLTMGRGIQTLTTIEGERAEIIEYTASEKSRIVGKPLNKVKFPKGALINMVVRGKETIIPRGDFIVNEGDRVVIFSMASAASEVEKYFK.

An RCK N-terminal 1 domain is found at 1–124 (MKAVIIGAGE…RAQVGVDLMI (124 aa)). NAD(+)-binding positions include 7 to 11 (GAGEV), Asp29, 70 to 71 (TG), and Arg101. The 82-residue stretch at 144–225 (IDAEMFAEGK…MEDLESVFGS (82 aa)) folds into the RCK C-terminal 1 domain. Positions 230–348 (RTRILLIGCG…FEMVGIDMAV (119 aa)) constitute an RCK N-terminal 2 domain. Residue 232–262 (RILLIGCGIVGMYLAKLIDKEENADLRIIEH) coordinates NAD(+). The 81-residue stretch at 368–448 (QTLTTIEGER…AASEVEKYFK (81 aa)) folds into the RCK C-terminal 2 domain.

Its function is as follows. Part of a potassium transport system. The protein is Trk system potassium uptake protein TrkA homolog 1 (trkA1) of Methanosarcina mazei (strain ATCC BAA-159 / DSM 3647 / Goe1 / Go1 / JCM 11833 / OCM 88) (Methanosarcina frisia).